Consider the following 368-residue polypeptide: UDP-N-acetylglucosamine--N-acetylmuramyl-(pentapeptide) pyrophosphoryl-undecaprenol N-acetylglucosamine transferase (368 aa).

UDP-N-acetyl-alpha-D-glucosamine contacts are provided by residues 14-16 (TGG), N125, R168, S196, and Q297.

This sequence belongs to the glycosyltransferase 28 family. MurG subfamily.

The protein resides in the cell inner membrane. The enzyme catalyses di-trans,octa-cis-undecaprenyl diphospho-N-acetyl-alpha-D-muramoyl-L-alanyl-D-glutamyl-meso-2,6-diaminopimeloyl-D-alanyl-D-alanine + UDP-N-acetyl-alpha-D-glucosamine = di-trans,octa-cis-undecaprenyl diphospho-[N-acetyl-alpha-D-glucosaminyl-(1-&gt;4)]-N-acetyl-alpha-D-muramoyl-L-alanyl-D-glutamyl-meso-2,6-diaminopimeloyl-D-alanyl-D-alanine + UDP + H(+). The protein operates within cell wall biogenesis; peptidoglycan biosynthesis. In terms of biological role, cell wall formation. Catalyzes the transfer of a GlcNAc subunit on undecaprenyl-pyrophosphoryl-MurNAc-pentapeptide (lipid intermediate I) to form undecaprenyl-pyrophosphoryl-MurNAc-(pentapeptide)GlcNAc (lipid intermediate II). This chain is UDP-N-acetylglucosamine--N-acetylmuramyl-(pentapeptide) pyrophosphoryl-undecaprenol N-acetylglucosamine transferase, found in Nitrobacter winogradskyi (strain ATCC 25391 / DSM 10237 / CIP 104748 / NCIMB 11846 / Nb-255).